The sequence spans 878 residues: MKHLTSAEVRQMFLDFFKEKGHAVEPSASLVPHEDPSLLWINSGVATLKKYFDGRVVPENPRIVNAQKSIRTNDIENVGKTARHHTFFEMLGNFSIGDYFKEEAITWAWEFLTSEKWIGFDPELLSVTVHPEDEEAYTLWAEKIGVPEERIIRLEGNFWDIGEGPSGPNTEIFYDRGEKYGNDPSDSELYPGGENDRYLEVWNLVFSEFNHNPDGTYTPLPKKNIDTGMGLERMVSVIQDVSTNFDTDLFMPIIEATERISGDAYGKDAVKDTAFKVIADHIRTVAFAVSDGALPSNEGRGYVLRRLLRRAVRYAKTLGISRPFMYELVPTVAGIMDAFYPEVKEKQEFIAKVIKTEEERFHETLNEGLAILSDVIKKEKEKGSGIISGKDVFKLYDTYGFPVELTEEYAEDEQMTVDHKGFEAEMEKQRERARNARQDVGSMQVQGGALRDITAESTFVGYSAVKAEAKVIELLHDGQLISEAHEGDTVQILLDKTPFYAESGGQIGDRGVLRSEQAVVTIKDVKKAPNGQHVHEGTVDSGTIQKGASVTAEVEDQMRSGVVKNHTATHLLHQALKDVLGTHVNQAGSLVTENRLRFDFSHFGQVTKEELERIEGIVNEKIWESIPVAIDLKPINEAKEMGAMALFGEKYGDIVRVVQVGDYSLELCGGCHVTNTAEIGLFKIVSESGIGAGTRRIEAVTGKGAYQEMNSQLSLLQHAADELKSNVKDVPKRIQSLQAELKEAQRENESLLSKLGNVEAGAILSKVKDIGGVKVLAEKVNAKDMNHLRTMVDDLKAKLGSAVIILGAVQNEKVNLSAGVTKDLIEKGLHAGKMVKQAAEVCGGGGGGRPDMAQAGGKHPEKLEEALASAVDWIKSVL.

The Zn(2+) site is built by His-566, His-570, Cys-668, and His-672.

The protein belongs to the class-II aminoacyl-tRNA synthetase family. The cofactor is Zn(2+).

The protein localises to the cytoplasm. It catalyses the reaction tRNA(Ala) + L-alanine + ATP = L-alanyl-tRNA(Ala) + AMP + diphosphate. Catalyzes the attachment of alanine to tRNA(Ala) in a two-step reaction: alanine is first activated by ATP to form Ala-AMP and then transferred to the acceptor end of tRNA(Ala). Also edits incorrectly charged Ser-tRNA(Ala) and Gly-tRNA(Ala) via its editing domain. The chain is Alanine--tRNA ligase from Bacillus velezensis (strain DSM 23117 / BGSC 10A6 / LMG 26770 / FZB42) (Bacillus amyloliquefaciens subsp. plantarum).